We begin with the raw amino-acid sequence, 493 residues long: Guanosine-5'-triphosphate,3'-diphosphate pyrophosphatase (493 aa).

It belongs to the GppA/Ppx family. GppA subfamily.

The catalysed reaction is guanosine 3'-diphosphate 5'-triphosphate + H2O = guanosine 3',5'-bis(diphosphate) + phosphate + H(+). The protein operates within purine metabolism; ppGpp biosynthesis; ppGpp from GTP: step 2/2. In terms of biological role, catalyzes the conversion of pppGpp to ppGpp. Guanosine pentaphosphate (pppGpp) is a cytoplasmic signaling molecule which together with ppGpp controls the 'stringent response', an adaptive process that allows bacteria to respond to amino acid starvation, resulting in the coordinated regulation of numerous cellular activities. This is Guanosine-5'-triphosphate,3'-diphosphate pyrophosphatase from Salmonella paratyphi A (strain ATCC 9150 / SARB42).